We begin with the raw amino-acid sequence, 428 residues long: Glutamate-1-semialdehyde 2,1-aminomutase 2 (428 aa).

The residue at position 267 (lysine 267) is an N6-(pyridoxal phosphate)lysine.

Belongs to the class-III pyridoxal-phosphate-dependent aminotransferase family. HemL subfamily. Homodimer. Requires pyridoxal 5'-phosphate as cofactor.

It localises to the cytoplasm. It catalyses the reaction (S)-4-amino-5-oxopentanoate = 5-aminolevulinate. It participates in porphyrin-containing compound metabolism; protoporphyrin-IX biosynthesis; 5-aminolevulinate from L-glutamyl-tRNA(Glu): step 2/2. The polypeptide is Glutamate-1-semialdehyde 2,1-aminomutase 2 (Oceanobacillus iheyensis (strain DSM 14371 / CIP 107618 / JCM 11309 / KCTC 3954 / HTE831)).